The following is a 211-amino-acid chain: MKKVKIALTKGRLEKKAIEIFKAININTRELEDKGRKLIFNCENEEYNIELFLVKAKDVETYVEYGAADIGIVGKDTLMETDKEFYEVLDLNMGKCKFAVAALPSFKLDQGYNRKKIATKYPNIAREYFRKKCMDVELIKIEGSVELGPIVGLADAIVDIVETGNTLRENGLAVVEDICEISARMIVNKASMKTKKDEVIKIVENISEVIR.

It belongs to the ATP phosphoribosyltransferase family. Short subfamily. In terms of assembly, heteromultimer composed of HisG and HisZ subunits.

The protein resides in the cytoplasm. It carries out the reaction 1-(5-phospho-beta-D-ribosyl)-ATP + diphosphate = 5-phospho-alpha-D-ribose 1-diphosphate + ATP. Its pathway is amino-acid biosynthesis; L-histidine biosynthesis; L-histidine from 5-phospho-alpha-D-ribose 1-diphosphate: step 1/9. Its function is as follows. Catalyzes the condensation of ATP and 5-phosphoribose 1-diphosphate to form N'-(5'-phosphoribosyl)-ATP (PR-ATP). Has a crucial role in the pathway because the rate of histidine biosynthesis seems to be controlled primarily by regulation of HisG enzymatic activity. This chain is ATP phosphoribosyltransferase, found in Clostridium botulinum (strain 657 / Type Ba4).